The following is a 343-amino-acid chain: Heat-inducible transcription repressor HrcA (343 aa).

This sequence belongs to the HrcA family.

Negative regulator of class I heat shock genes (grpE-dnaK-dnaJ and groELS operons). Prevents heat-shock induction of these operons. The polypeptide is Heat-inducible transcription repressor HrcA (Mycobacterium tuberculosis (strain ATCC 25177 / H37Ra)).